Consider the following 628-residue polypeptide: Kelch-like protein diablo (628 aa).

The tract at residues 1–56 is disordered; that stretch reads MGDLPGSTGGGSGPAAAGNASGNSSSAGNTGLGVAGTTGVDRPPSPARLSHTSEKH. The span at 14 to 29 shows a compositional bias: low complexity; that stretch reads PAAAGNASGNSSSAGN. Residues 74–141 form the BTB domain; the sequence is CDVVLNVGGR…CYTAHIIVEE (68 aa). The BACK domain occupies 176 to 278; sequence CLGIRAFADT…SPKFLVGTVG (103 aa). 6 Kelch repeats span residues 325 to 371, 373 to 419, 420 to 466, 468 to 513, 515 to 560, and 561 to 607; these read VLFA…VLND, LYAV…VLDG, FLYA…VLGG, LYAI…VFNN, IYAV…VVNG, and QLYA…VMRA.

Its pathway is protein modification; protein ubiquitination. Its function is as follows. Probable substrate-specific adapter of an E3 ubiquitin-protein ligase complex which mediates the ubiquitination and subsequent proteasomal degradation of target proteins. May have a role in synapse differentiation and growth. This chain is Kelch-like protein diablo, found in Drosophila persimilis (Fruit fly).